We begin with the raw amino-acid sequence, 921 residues long: Dual serine/threonine and tyrosine protein kinase (921 aa).

The 255-residue stretch at 645–899 (PKLGRELGRG…PLLGIVEPSL (255 aa)) folds into the Protein kinase domain. Residues 651 to 659 (LGRGQYGVV) and K674 each bind ATP. D770 acts as the Proton acceptor in catalysis.

Belongs to the protein kinase superfamily. Ser/Thr protein kinase family.

It is found in the cytoplasm. The protein localises to the cell membrane. It localises to the apical cell membrane. Its subcellular location is the basolateral cell membrane. The protein resides in the cell junction. The enzyme catalyses L-seryl-[protein] + ATP = O-phospho-L-seryl-[protein] + ADP + H(+). It carries out the reaction L-threonyl-[protein] + ATP = O-phospho-L-threonyl-[protein] + ADP + H(+). The catalysed reaction is L-tyrosyl-[protein] + ATP = O-phospho-L-tyrosyl-[protein] + ADP + H(+). Functionally, may act as a positive regulator of ERK phosphorylation downstream of fibroblast growth factor-receptor activation. May induce both caspase-dependent apoptosis and caspase-independent cell death. May play a role in the embryonic development. The polypeptide is Dual serine/threonine and tyrosine protein kinase (dstyk) (Takifugu rubripes (Japanese pufferfish)).